The following is a 243-amino-acid chain: Ribonuclease 3 (243 aa).

Positions 10–146 (VNRFRKRFDT…FIGALYLDQG (137 aa)) constitute an RNase III domain. Residue E59 coordinates Mg(2+). The active site involves D63. Residues D132 and E135 each coordinate Mg(2+). The active site involves E135. The region spanning 172–241 (DFKTQFQEYV…AESAYKQLKQ (70 aa)) is the DRBM domain. Basic and acidic residues predominate over residues 219–231 (GKGKTKKESEQRA). A disordered region spans residues 219 to 243 (GKGKTKKESEQRAAESAYKQLKQIK).

It belongs to the ribonuclease III family. In terms of assembly, homodimer. Requires Mg(2+) as cofactor.

Its subcellular location is the cytoplasm. It catalyses the reaction Endonucleolytic cleavage to 5'-phosphomonoester.. Digests double-stranded RNA. Involved in the processing of primary rRNA transcript to yield the immediate precursors to the large and small rRNAs (23S and 16S). Processes some mRNAs, and tRNAs when they are encoded in the rRNA operon. Processes pre-crRNA and tracrRNA of type II CRISPR loci if present in the organism. The polypeptide is Ribonuclease 3 (Staphylococcus aureus (strain USA300)).